A 94-amino-acid polypeptide reads, in one-letter code: Alpha-elapitoxin-Nss2a (94 aa).

Positions 1–21 are cleaved as a signal peptide; that stretch reads MKTLLLTLVVVTIVCLDLGDS. 5 disulfides stabilise this stretch: cysteine 24-cysteine 41, cysteine 34-cysteine 62, cysteine 47-cysteine 51, cysteine 66-cysteine 77, and cysteine 78-cysteine 83.

The protein belongs to the three-finger toxin family. Long-chain subfamily. Type II alpha-neurotoxin sub-subfamily. In terms of tissue distribution, expressed by the venom gland.

The protein localises to the secreted. Its function is as follows. Binds with high affinity to muscular (alpha-1/CHRNA1) and neuronal (alpha-7/CHRNA7) nicotinic acetylcholine receptor (nAChR) and inhibits acetylcholine from binding to the receptor, thereby impairing neuromuscular and neuronal transmission. The polypeptide is Alpha-elapitoxin-Nss2a (Notechis scutatus scutatus (Mainland tiger snake)).